We begin with the raw amino-acid sequence, 269 residues long: Aminodeoxychorismate lyase (269 aa).

Position 140 is an N6-(pyridoxal phosphate)lysine (K140).

The protein belongs to the class-IV pyridoxal-phosphate-dependent aminotransferase family. Homodimer. The cofactor is pyridoxal 5'-phosphate.

The enzyme catalyses 4-amino-4-deoxychorismate = 4-aminobenzoate + pyruvate + H(+). It participates in cofactor biosynthesis; tetrahydrofolate biosynthesis; 4-aminobenzoate from chorismate: step 2/2. Involved in the biosynthesis of p-aminobenzoate (PABA), a precursor of tetrahydrofolate. Converts 4-amino-4-deoxychorismate into 4-aminobenzoate (PABA) and pyruvate. The protein is Aminodeoxychorismate lyase (pabC) of Escherichia coli (strain K12).